Here is a 212-residue protein sequence, read N- to C-terminus: Probable GTP-binding protein EngB (212 aa).

Positions 38–210 (ALPQIAFVGK…KTSLAKCIKL (173 aa)) constitute an EngB-type G domain. Residues 46–53 (GKSNVGKS), 73–77 (GRTRQ), 91–94 (DLPG), 158–161 (TKSD), and 189–191 (VSS) contribute to the GTP site. Mg(2+)-binding residues include Ser-53 and Thr-75.

Belongs to the TRAFAC class TrmE-Era-EngA-EngB-Septin-like GTPase superfamily. EngB GTPase family. Mg(2+) serves as cofactor.

In terms of biological role, necessary for normal cell division and for the maintenance of normal septation. In Rickettsia bellii (strain OSU 85-389), this protein is Probable GTP-binding protein EngB.